Reading from the N-terminus, the 333-residue chain is Cell division protein FtsQ (333 aa).

Residues 1 to 99 (MTGTGPHGDP…ARREAKRRAV (99 aa)) form a disordered region. The Cytoplasmic portion of the chain corresponds to 1-118 (MTGTGPHGDP…VPRNTIRGLK (118 aa)). Over residues 11 to 22 (AEDPAGPDDTAA) the composition is skewed to acidic residues. Positions 44–57 (TTETTAQTGTTAEA) are enriched in low complexity. A compositionally biased stretch (basic and acidic residues) spans 73-92 (ERAERRAARDRAMAIEQARR). Residues 119-139 (VLMWAALVSVLAVALGLLLYF) form a helical membrane-spanning segment. The Extracellular segment spans residues 140–333 (TPIMSARNVE…VSSPDLPTVK (194 aa)). Residues 143 to 211 (MSARNVEVSG…STLKISIVER (69 aa)) form the POTRA domain.

This sequence belongs to the FtsQ/DivIB family. FtsQ subfamily.

It localises to the cell membrane. Essential cell division protein. This Mycolicibacterium smegmatis (strain ATCC 700084 / mc(2)155) (Mycobacterium smegmatis) protein is Cell division protein FtsQ.